We begin with the raw amino-acid sequence, 163 residues long: ATP synthase subunit b (163 aa).

The helical transmembrane segment at 1–21 (MISFNLTSIVNLVGFLAFMFL) threads the bilayer.

The protein belongs to the ATPase B chain family. As to quaternary structure, F-type ATPases have 2 components, F(1) - the catalytic core - and F(0) - the membrane proton channel. F(1) has five subunits: alpha(3), beta(3), gamma(1), delta(1), epsilon(1). F(0) has three main subunits: a(1), b(2) and c(10-14). The alpha and beta chains form an alternating ring which encloses part of the gamma chain. F(1) is attached to F(0) by a central stalk formed by the gamma and epsilon chains, while a peripheral stalk is formed by the delta and b chains.

Its subcellular location is the cell inner membrane. Its function is as follows. F(1)F(0) ATP synthase produces ATP from ADP in the presence of a proton or sodium gradient. F-type ATPases consist of two structural domains, F(1) containing the extramembraneous catalytic core and F(0) containing the membrane proton channel, linked together by a central stalk and a peripheral stalk. During catalysis, ATP synthesis in the catalytic domain of F(1) is coupled via a rotary mechanism of the central stalk subunits to proton translocation. In terms of biological role, component of the F(0) channel, it forms part of the peripheral stalk, linking F(1) to F(0). The polypeptide is ATP synthase subunit b (Petrotoga mobilis (strain DSM 10674 / SJ95)).